The sequence spans 112 residues: Protein F-112 (112 aa).

Its function is as follows. Essential for virus function. This is Protein F-112 from Saccharolobus solfataricus (Sulfolobus solfataricus).